We begin with the raw amino-acid sequence, 204 residues long: CLAVATA3/ESR (CLE)-related protein 1 (204 aa).

The first 21 residues, 1 to 21, serve as a signal peptide directing secretion; sequence MAKNAMLCLLILSVVLALAFA. The segment at 21–83 is required for secretion from the host cytoplasm to the host apoplasm; that stretch reads ATNEKDDKEA…SNQLQNAYRM (63 aa). A glycan (N-linked (GlcNAc...) asparagine) is linked at asparagine 32. Residues 116–204 are disordered; sequence RNTGMKPQSY…TPGVPDRQHR (89 aa). 3 stretches are compositionally biased toward basic and acidic residues: residues 139-151, 160-172, and 181-193; these read LHNR…EQKR. 3 propeptides (removed in mature form) span residues 142–150, 163–171, and 184–192; these read REKILEEQK and REKTLEEQK.

The protein belongs to the CLV3/ESR signal peptide family. Preprocessing of the precursor by host proteases leads first to the production of 21-mer CLE-containing peptides (Arg-130 to Lys-150, Arg-151 to Lys-171 and Arg-172 to Lys-192) followed by an ultimate C-term trimming to give the mature 12-mer CLE1-1 peptide. As to expression, highly expressed exclusively within the dorsal esophageal gland cell during syncytium formation in host plants.

Its subcellular location is the secreted. The protein localises to the host cytoplasm. It localises to the host extracellular space. The protein resides in the extracellular space. It is found in the apoplast. Its function is as follows. Mimics host plant CLE extracellular signal peptides that regulate cell fate. May play a role in the differentiation or division of feeding cells (syncytia) induced in plant roots during infection. This chain is CLAVATA3/ESR (CLE)-related protein 1, found in Globodera rostochiensis (Golden nematode worm).